We begin with the raw amino-acid sequence, 694 residues long: Elongation factor G (694 aa).

A tr-type G domain is found at 6–288 (KLYRNIGIAA…GVIEYLPSPT (283 aa)). Residues 15–22 (AHVDAGKT), 86–90 (DTPGH), and 140–143 (NKMD) each bind GTP.

The protein belongs to the TRAFAC class translation factor GTPase superfamily. Classic translation factor GTPase family. EF-G/EF-2 subfamily.

The protein localises to the cytoplasm. In terms of biological role, catalyzes the GTP-dependent ribosomal translocation step during translation elongation. During this step, the ribosome changes from the pre-translocational (PRE) to the post-translocational (POST) state as the newly formed A-site-bound peptidyl-tRNA and P-site-bound deacylated tRNA move to the P and E sites, respectively. Catalyzes the coordinated movement of the two tRNA molecules, the mRNA and conformational changes in the ribosome. The sequence is that of Elongation factor G from Legionella pneumophila (strain Corby).